A 367-amino-acid chain; its full sequence is Alanine racemase (367 aa).

K35 functions as the Proton acceptor; specific for D-alanine in the catalytic mechanism. K35 carries the N6-(pyridoxal phosphate)lysine modification. R130 provides a ligand contact to substrate. Y259 (proton acceptor; specific for L-alanine) is an active-site residue. M307 contacts substrate.

It belongs to the alanine racemase family. The cofactor is pyridoxal 5'-phosphate.

The enzyme catalyses L-alanine = D-alanine. Its pathway is amino-acid biosynthesis; D-alanine biosynthesis; D-alanine from L-alanine: step 1/1. Catalyzes the interconversion of L-alanine and D-alanine. May also act on other amino acids. The sequence is that of Alanine racemase (alr) from Delftia acidovorans (strain DSM 14801 / SPH-1).